Here is a 464-residue protein sequence, read N- to C-terminus: tRNA(Ile)-lysidine synthase (464 aa).

30–35 is an ATP binding site; the sequence is SGGVDS.

The protein belongs to the tRNA(Ile)-lysidine synthase family.

The protein localises to the cytoplasm. The enzyme catalyses cytidine(34) in tRNA(Ile2) + L-lysine + ATP = lysidine(34) in tRNA(Ile2) + AMP + diphosphate + H(+). Ligates lysine onto the cytidine present at position 34 of the AUA codon-specific tRNA(Ile) that contains the anticodon CAU, in an ATP-dependent manner. Cytidine is converted to lysidine, thus changing the amino acid specificity of the tRNA from methionine to isoleucine. The polypeptide is tRNA(Ile)-lysidine synthase (Shewanella oneidensis (strain ATCC 700550 / JCM 31522 / CIP 106686 / LMG 19005 / NCIMB 14063 / MR-1)).